Consider the following 339-residue polypeptide: RxLR effector protein SFI4 (339 aa).

An N-terminal signal peptide occupies residues M1 to A24. The short motif at R51 to R74 is the RxLR-dEER element. TPR repeat units lie at residues A106 to I139, I190 to E223, A232 to R265, and A274 to I307.

This sequence belongs to the RxLR effector family.

It localises to the secreted. The protein resides in the host nucleus. The protein localises to the host cytoplasm. Its function is as follows. Effector that suppresses flg22-induced post-translational MAP kinase activation in tomato but not in Arabidopsis. The perception of highly conserved pathogen- or microbe-associated molecular patterns (PAMPs/MAMPs), such as flg22, triggers converging signaling pathways recruiting MAP kinase cascades and inducing transcriptional re-programming, yielding a generic antimicrobial response. This chain is RxLR effector protein SFI4, found in Phytophthora infestans (strain T30-4) (Potato late blight agent).